The chain runs to 435 residues: Glucoside xylosyltransferase 1 (435 aa).

Residues 1-6 (MRRYLR) lie on the Cytoplasmic side of the membrane. A helical; Signal-anchor for type II membrane protein membrane pass occupies residues 7-29 (VVGLCLACGFCSLLYAFSQLAVS). The Lumenal portion of the chain corresponds to 30–435 (LEEGAAVGRR…NRYDTPPKER (406 aa)). Residues Asn168 and Asn232 are each glycosylated (N-linked (GlcNAc...) asparagine).

Belongs to the glycosyltransferase 8 family.

The protein resides in the membrane. It carries out the reaction 3-O-(beta-D-glucosyl)-L-seryl-[EGF-like domain protein] + UDP-alpha-D-xylose = 3-O-[alpha-D-xylosyl-(1-&gt;3)-beta-D-glucosyl]-L-seryl-[EGF-like domain protein] + UDP + H(+). In terms of biological role, glycosyltransferase which elongates the O-linked glucose attached to EGF-like repeats in the extracellular domain of Notch proteins by catalyzing the addition of xylose. The polypeptide is Glucoside xylosyltransferase 1 (Gxylt1) (Rattus norvegicus (Rat)).